Reading from the N-terminus, the 273-residue chain is Bis(5'-nucleosyl)-tetraphosphatase, symmetrical (273 aa).

The protein belongs to the Ap4A hydrolase family.

The catalysed reaction is P(1),P(4)-bis(5'-adenosyl) tetraphosphate + H2O = 2 ADP + 2 H(+). In terms of biological role, hydrolyzes diadenosine 5',5'''-P1,P4-tetraphosphate to yield ADP. This Aeromonas salmonicida (strain A449) protein is Bis(5'-nucleosyl)-tetraphosphatase, symmetrical.